The primary structure comprises 512 residues: Histidine ammonia-lyase (512 aa).

Positions 143-145 (CSG) form a cross-link, 5-imidazolinone (Cys-Gly). Residue Ser144 is modified to 2,3-didehydroalanine (Ser).

Belongs to the PAL/histidase family. In terms of processing, contains an active site 4-methylidene-imidazol-5-one (MIO), which is formed autocatalytically by cyclization and dehydration of residues Cys-Ser-Gly.

It is found in the cytoplasm. It carries out the reaction L-histidine = trans-urocanate + NH4(+). Its pathway is amino-acid degradation; L-histidine degradation into L-glutamate; N-formimidoyl-L-glutamate from L-histidine: step 1/3. This is Histidine ammonia-lyase from Streptomyces coelicolor (strain ATCC BAA-471 / A3(2) / M145).